A 219-amino-acid chain; its full sequence is Predicted GPI-anchored protein 6 (219 aa).

An N-terminal signal peptide occupies residues 1–19 (MQFQTLLVVAGSLVASTLA). N-linked (GlcNAc...) asparagine glycans are attached at residues N21, N173, and N188. G194 carries the GPI-anchor amidated glycine lipid modification. A propeptide spans 195–219 (GAVGGASNQITVGFAAIAGLAAILL) (removed in mature form).

The protein belongs to the flocculin family. Post-translationally, the GPI-anchor is attached to the protein in the endoplasmic reticulum and serves to target the protein to the cell surface. There, the glucosamine-inositol phospholipid moiety is cleaved off and the GPI-modified mannoprotein is covalently attached via its lipidless GPI glycan remnant to the 1,6-beta-glucan of the outer cell wall layer.

Its subcellular location is the secreted. It is found in the cell wall. The protein resides in the membrane. Its function is as follows. Probable cell wall protein that participates directly in adhesive cell-cell interactions. The chain is Predicted GPI-anchored protein 6 (PGA6) from Candida albicans (strain SC5314 / ATCC MYA-2876) (Yeast).